The sequence spans 248 residues: Triosephosphate isomerase (248 aa).

Substrate is bound at residue 9–11 (NWK). His94 acts as the Electrophile in catalysis. The active-site Proton acceptor is the Glu166. Substrate contacts are provided by residues Gly172, Ser211, and 232 to 233 (GG).

This sequence belongs to the triosephosphate isomerase family. As to quaternary structure, homodimer.

The protein localises to the cytoplasm. It catalyses the reaction D-glyceraldehyde 3-phosphate = dihydroxyacetone phosphate. It participates in carbohydrate biosynthesis; gluconeogenesis. It functions in the pathway carbohydrate degradation; glycolysis; D-glyceraldehyde 3-phosphate from glycerone phosphate: step 1/1. Functionally, involved in the gluconeogenesis. Catalyzes stereospecifically the conversion of dihydroxyacetone phosphate (DHAP) to D-glyceraldehyde-3-phosphate (G3P). This is Triosephosphate isomerase from Herminiimonas arsenicoxydans.